The sequence spans 46 residues: YVISAIPPTLTSKIHFRPELPSERNQLIQRLPMGAIIKCMMYYKEA.

Belongs to the flavin monoamine oxidase family. Monomer, homo- or heterodimer (containing two subunits of similar size). Each subunit contains a covalently bound flavin. Enzymatically active as monomer. Requires FAD as cofactor.

The protein localises to the mitochondrion outer membrane. It catalyses the reaction a secondary aliphatic amine + O2 + H2O = a primary amine + an aldehyde + H2O2. The enzyme catalyses a primary methyl amine + O2 + H2O = an aldehyde + H2O2 + NH4(+). It carries out the reaction (R)-adrenaline + O2 + H2O = (R)-3,4-dihydroxymandelaldehyde + methylamine + H2O2. The catalysed reaction is dopamine + O2 + H2O = 3,4-dihydroxyphenylacetaldehyde + H2O2 + NH4(+). It catalyses the reaction tyramine + O2 + H2O = (4-hydroxyphenyl)acetaldehyde + H2O2 + NH4(+). The enzyme catalyses (R)-noradrenaline + O2 + H2O = (R)-3,4-dihydroxymandelaldehyde + H2O2 + NH4(+). It carries out the reaction serotonin + O2 + H2O = (5-hydroxyindol-3-yl)acetaldehyde + H2O2 + NH4(+). The catalysed reaction is kynuramine + O2 + H2O = 3-(2-aminophenyl)-3-oxopropanal + H2O2 + NH4(+). It catalyses the reaction tryptamine + O2 + H2O = indole-3-acetaldehyde + H2O2 + NH4(+). The enzyme catalyses 2-phenylethylamine + O2 + H2O = 2-phenylacetaldehyde + H2O2 + NH4(+). In terms of biological role, catalyzes the oxidative deamination of primary and some secondary amine such as neurotransmitters, with concomitant reduction of oxygen to hydrogen peroxide and has important functions in the metabolism of neuroactive and vasoactive amines in the central nervous system and peripheral tissues. Preferentially oxidizes serotonin. Also catalyzes the oxidative deamination of kynuramine to 3-(2-aminophenyl)-3-oxopropanal that can spontaneously condense to 4-hydroxyquinoline. This Ovis aries (Sheep) protein is Amine oxidase [flavin-containing] A.